The sequence spans 1028 residues: Beta-galactosidase (1028 aa).

Residues Asn104 and Asp203 each coordinate substrate. Asp203 contributes to the Na(+) binding site. 3 residues coordinate Mg(2+): Glu418, His420, and Glu463. Substrate is bound by residues Glu463 and Glu539–His542. Glu463 functions as the Proton donor in the catalytic mechanism. Residue Glu539 is the Nucleophile of the active site. Asn599 contributes to the Mg(2+) binding site. Residues Phe603 and Asn606 each coordinate Na(+). Positions 606 and 1004 each coordinate substrate.

Belongs to the glycosyl hydrolase 2 family. As to quaternary structure, homotetramer. Mg(2+) is required as a cofactor. The cofactor is Na(+).

The catalysed reaction is Hydrolysis of terminal non-reducing beta-D-galactose residues in beta-D-galactosides.. The protein is Beta-galactosidase of Enterobacter sp. (strain 638).